The sequence spans 467 residues: Adenosylhomocysteinase (467 aa).

Residues T68, D144, and E169 each coordinate substrate. An NAD(+)-binding site is contributed by T170–T172. Residues K199 and D203 each contribute to the substrate site. Residues N204, G233 to G238, E256, N305, I326 to H328, and N373 contribute to the NAD(+) site.

Belongs to the adenosylhomocysteinase family. NAD(+) is required as a cofactor.

Its subcellular location is the cytoplasm. The enzyme catalyses S-adenosyl-L-homocysteine + H2O = L-homocysteine + adenosine. It functions in the pathway amino-acid biosynthesis; L-homocysteine biosynthesis; L-homocysteine from S-adenosyl-L-homocysteine: step 1/1. Its function is as follows. May play a key role in the regulation of the intracellular concentration of adenosylhomocysteine. The protein is Adenosylhomocysteinase of Acinetobacter baylyi (strain ATCC 33305 / BD413 / ADP1).